Reading from the N-terminus, the 209-residue chain is Small ribosomal subunit protein uS4 (209 aa).

In terms of domain architecture, S4 RNA-binding spans 98–164 (SRLDNVVYRG…TPFIVARETA (67 aa)).

Belongs to the universal ribosomal protein uS4 family. Part of the 30S ribosomal subunit. Contacts protein S5. The interaction surface between S4 and S5 is involved in control of translational fidelity.

Functionally, one of the primary rRNA binding proteins, it binds directly to 16S rRNA where it nucleates assembly of the body of the 30S subunit. Its function is as follows. With S5 and S12 plays an important role in translational accuracy. The protein is Small ribosomal subunit protein uS4 of Frankia casuarinae (strain DSM 45818 / CECT 9043 / HFP020203 / CcI3).